We begin with the raw amino-acid sequence, 160 residues long: Ribosomal RNA large subunit methyltransferase H (160 aa).

S-adenosyl-L-methionine is bound by residues Leu76 and Gly108.

The protein belongs to the RNA methyltransferase RlmH family. Homodimer.

The protein resides in the cytoplasm. The catalysed reaction is pseudouridine(1915) in 23S rRNA + S-adenosyl-L-methionine = N(3)-methylpseudouridine(1915) in 23S rRNA + S-adenosyl-L-homocysteine + H(+). In terms of biological role, specifically methylates the pseudouridine at position 1915 (m3Psi1915) in 23S rRNA. This chain is Ribosomal RNA large subunit methyltransferase H, found in Rhodopseudomonas palustris (strain TIE-1).